The primary structure comprises 257 residues: Ribosome-recycling factor, mitochondrial (257 aa).

Belongs to the RRF family.

Its subcellular location is the mitochondrion. Its function is as follows. Necessary for protein synthesis in mitochondria. Functions as a ribosome recycling factor in mitochondria. The sequence is that of Ribosome-recycling factor, mitochondrial (RRF1) from Debaryomyces hansenii (strain ATCC 36239 / CBS 767 / BCRC 21394 / JCM 1990 / NBRC 0083 / IGC 2968) (Yeast).